The primary structure comprises 136 residues: Ribosome-binding factor A (136 aa).

It belongs to the RbfA family. Monomer. Binds 30S ribosomal subunits, but not 50S ribosomal subunits or 70S ribosomes.

It is found in the cytoplasm. One of several proteins that assist in the late maturation steps of the functional core of the 30S ribosomal subunit. Associates with free 30S ribosomal subunits (but not with 30S subunits that are part of 70S ribosomes or polysomes). Required for efficient processing of 16S rRNA. May interact with the 5'-terminal helix region of 16S rRNA. The polypeptide is Ribosome-binding factor A (Serratia proteamaculans (strain 568)).